The following is a 4042-amino-acid chain: Polyketide synthase-nonribosomal peptide synthetase ffsA (4042 aa).

The 437-residue stretch at 17-453 folds into the Ketosynthase family 3 (KS3) domain; that stretch reads REPIAIVGSA…GANAHAILEA (437 aa). Catalysis depends on for beta-ketoacyl synthase activity residues cysteine 190, histidine 330, and histidine 373. A malonyl-CoA:ACP transacylase (MAT) domain region spans residues 561–878; the sequence is VFTGQGAQWK…TGLLSRGRPD (318 aa). The interval 950–1083 is N-terminal hotdog fold; sequence HEILGTKCPD…GKLKVTLGEP (134 aa). Residues 950 to 1249 are dehydratase (DH) domain; the sequence is HEILGTKCPD…LQTKPLANAT (300 aa). The 302-residue stretch at 950 to 1251 folds into the PKS/mFAS DH domain; the sequence is HEILGTKCPD…TKPLANATAA (302 aa). The active-site Proton acceptor; for dehydratase activity is the histidine 982. The interval 1098–1251 is C-terminal hotdog fold; the sequence is MIDVDSERFY…TKPLANATAA (154 aa). The Proton donor; for dehydratase activity role is filled by aspartate 1158. The interval 1390–1613 is methyltransferase (MT) domain; the sequence is DNLLNDFYVH…VDDHVNFLRD (224 aa). The ketoreductase (KR)domain stretch occupies residues 2116 to 2289; the sequence is TYWLVGLSGG…AGSAINIGTI (174 aa). The Carrier 1 domain occupies 2399–2476; sequence EAREIIEESL…EMVAAAQEKL (78 aa). Serine 2436 is modified (O-(pantetheine 4'-phosphoryl)serine). The tract at residues 2515–2601 is disordered; that stretch reads EKAEYADFDD…FDSDSDNASI (87 aa). The span at 2520–2532 shows a compositional bias: acidic residues; the sequence is ADFDDENEEEGIP. The condensation stretch occupies residues 2629–3061; the sequence is RTLPMSFGQT…ISRPSLYDPQ (433 aa). The segment at 3089–3486 is adenylation; the sequence is EIVKAHGSKV…EDGHLVLEGR (398 aa). Residues 3607–3684 enclose the Carrier 2 domain; that stretch reads RDSTEKLKDI…AMARMVDPTA (78 aa). O-(pantetheine 4'-phosphoryl)serine is present on serine 3644. Residues 3750 to 3971 form a reductase-like domain region; that stretch reads ITGATGFLGK…DFVDVEKVAT (222 aa).

The protein in the C-terminal section; belongs to the NRP synthetase family.

The protein operates within mycotoxin biosynthesis. In terms of biological role, hybrid PKS-NRPS synthetase; part of the gene cluster that mediates the biosynthesis of the cytotoxic leucine-containing cytochalasans, including aspochalasin C, aspochalasin E, TMC-169, flavichalasine F, aspergillin PZ, aspochalasin M and flavichalasine G. The first step in the pathway is catalyzed by the hybrid PKS-NRPS ffsA that utilizes 8 units of malonyl-CoA to iteratively assemble the octaketide chain before addition of L-leucine by the C-terminal NRPS modules. Because ffsA lacks a designated enoylreductase (ER) domain, the required activity is provided the enoyl reductase fssC. The methyltransferase (MT) domain of ffsA catalyzes the alpha-methylation at C10 and C14 using S-adenosyl-L-methionine as the methyl-donating cosubstrate. Reduction by the hydrolyase ffsE, followed by dehydration and intra-molecular Diels-Alder cyclization by the Diels-Alderase ffsF then yield the required isoindolone-fused macrocycle. A number of oxidative steps catalyzed by the tailoring cytochrome P450 monooxygenase ffsD, the FAD-linked oxidoreductase ffsJ and the short-chain dehydrogenase/reductase ffsI, are further required to afford the final products. This is Polyketide synthase-nonribosomal peptide synthetase ffsA from Aspergillus flavipes.